Here is a 529-residue protein sequence, read N- to C-terminus: UDP-glucuronosyltransferase 2B9 (529 aa).

The signal sequence occupies residues 1–21 (MSVKWTSVILLIQLSFYFSSG). N-linked (GlcNAc...) asparagine glycans are attached at residues Asn67, Asn68, and Asn88. A helical membrane pass occupies residues 494 to 514 (IGFLLACVATVIFVIMKCCLF).

It belongs to the UDP-glycosyltransferase family.

It is found in the microsome membrane. The protein resides in the endoplasmic reticulum membrane. It carries out the reaction glucuronate acceptor + UDP-alpha-D-glucuronate = acceptor beta-D-glucuronoside + UDP + H(+). UDPGT is of major importance in the conjugation and subsequent elimination of potentially toxic xenobiotics and endogenous compounds. This isozyme is active on C18, C19, and C21 steroids, bile acids, and several xenobiotics including eugenol, 1-naphthol, and p-nitrophenol. This is UDP-glucuronosyltransferase 2B9 (UGT2B9) from Macaca fascicularis (Crab-eating macaque).